Here is an 827-residue protein sequence, read N- to C-terminus: Leucine--tRNA ligase (827 aa).

The 'HIGH' region signature appears at 42–52 (PYPSGKLHMGH). The 'KMSKS' region signature appears at 583–587 (KMSKS). Residue Lys-586 participates in ATP binding.

The protein belongs to the class-I aminoacyl-tRNA synthetase family.

It is found in the cytoplasm. The catalysed reaction is tRNA(Leu) + L-leucine + ATP = L-leucyl-tRNA(Leu) + AMP + diphosphate. The protein is Leucine--tRNA ligase of Pelotomaculum thermopropionicum (strain DSM 13744 / JCM 10971 / SI).